The sequence spans 289 residues: 3-methyl-2-oxobutanoate hydroxymethyltransferase (289 aa).

Positions 1–15 are enriched in polar residues; the sequence is MSTTFQLDTSTSRAN. The interval 1 to 20 is disordered; sequence MSTTFQLDTSTSRANPTPAP. Positions 67 and 106 each coordinate Mg(2+). Residues 67–68, Asp106, and Lys136 each bind 3-methyl-2-oxobutanoate; that span reads DS. Glu138 provides a ligand contact to Mg(2+). Catalysis depends on Glu205, which acts as the Proton acceptor.

It belongs to the PanB family. Homodecamer; pentamer of dimers. Requires Mg(2+) as cofactor.

Its subcellular location is the cytoplasm. It catalyses the reaction 3-methyl-2-oxobutanoate + (6R)-5,10-methylene-5,6,7,8-tetrahydrofolate + H2O = 2-dehydropantoate + (6S)-5,6,7,8-tetrahydrofolate. It functions in the pathway cofactor biosynthesis; (R)-pantothenate biosynthesis; (R)-pantoate from 3-methyl-2-oxobutanoate: step 1/2. Catalyzes the reversible reaction in which hydroxymethyl group from 5,10-methylenetetrahydrofolate is transferred onto alpha-ketoisovalerate to form ketopantoate. The protein is 3-methyl-2-oxobutanoate hydroxymethyltransferase of Novosphingobium aromaticivorans (strain ATCC 700278 / DSM 12444 / CCUG 56034 / CIP 105152 / NBRC 16084 / F199).